Here is a 234-residue protein sequence, read N- to C-terminus: Coiled-coil domain-containing protein 194 (234 aa).

The signal sequence occupies residues 1-42 (MAEPGPEPGRAWRVLALCGVAVFLAAAAAGGALVAWNLAASA). 2 disordered regions span residues 44–67 (RGPR…PGVD) and 187–234 (VLEA…RARG). Residues 66-163 (VDDLRRRLAE…TRRLDEALRR (98 aa)) are a coiled coil. Over residues 187–196 (VLEAEMSPQR) the composition is skewed to low complexity. A compositionally biased stretch (basic residues) spans 197–217 (RVPRPRPRSGSRPRPSPRSRS).

The polypeptide is Coiled-coil domain-containing protein 194 (Homo sapiens (Human)).